We begin with the raw amino-acid sequence, 439 residues long: Tol-Pal system protein TolB (439 aa).

Residues 1 to 22 (MKKPLRWLAALTALLLPLSAFA) form the signal peptide.

The protein belongs to the TolB family. In terms of assembly, the Tol-Pal system is composed of five core proteins: the inner membrane proteins TolA, TolQ and TolR, the periplasmic protein TolB and the outer membrane protein Pal. They form a network linking the inner and outer membranes and the peptidoglycan layer.

The protein resides in the periplasm. In terms of biological role, part of the Tol-Pal system, which plays a role in outer membrane invagination during cell division and is important for maintaining outer membrane integrity. The polypeptide is Tol-Pal system protein TolB (Xanthomonas campestris pv. campestris (strain 8004)).